A 312-amino-acid polypeptide reads, in one-letter code: DNA-directed RNA polymerase subunit alpha (312 aa).

Positions 1–229 (MLQYQIDRIE…ELFQPLATVT (229 aa)) are alpha N-terminal domain (alpha-NTD). Positions 239–312 (EPTAEAQIPL…IQIPQSRTSA (74 aa)) are alpha C-terminal domain (alpha-CTD).

The protein belongs to the RNA polymerase alpha chain family. In cyanobacteria the RNAP catalytic core is composed of 2 alpha, 1 beta, 1 beta', 1 gamma and 1 omega subunit. When a sigma factor is associated with the core the holoenzyme is formed, which can initiate transcription.

It carries out the reaction RNA(n) + a ribonucleoside 5'-triphosphate = RNA(n+1) + diphosphate. In terms of biological role, DNA-dependent RNA polymerase catalyzes the transcription of DNA into RNA using the four ribonucleoside triphosphates as substrates. The sequence is that of DNA-directed RNA polymerase subunit alpha from Synechococcus sp. (strain WH7803).